Reading from the N-terminus, the 185-residue chain is Ribosome-recycling factor (185 aa).

Belongs to the RRF family.

It is found in the cytoplasm. Responsible for the release of ribosomes from messenger RNA at the termination of protein biosynthesis. May increase the efficiency of translation by recycling ribosomes from one round of translation to another. The sequence is that of Ribosome-recycling factor from Symbiobacterium thermophilum (strain DSM 24528 / JCM 14929 / IAM 14863 / T).